A 95-amino-acid chain; its full sequence is Aspartyl/glutamyl-tRNA(Asn/Gln) amidotransferase subunit C (95 aa).

This sequence belongs to the GatC family. In terms of assembly, heterotrimer of A, B and C subunits.

It carries out the reaction L-glutamyl-tRNA(Gln) + L-glutamine + ATP + H2O = L-glutaminyl-tRNA(Gln) + L-glutamate + ADP + phosphate + H(+). The catalysed reaction is L-aspartyl-tRNA(Asn) + L-glutamine + ATP + H2O = L-asparaginyl-tRNA(Asn) + L-glutamate + ADP + phosphate + 2 H(+). Allows the formation of correctly charged Asn-tRNA(Asn) or Gln-tRNA(Gln) through the transamidation of misacylated Asp-tRNA(Asn) or Glu-tRNA(Gln) in organisms which lack either or both of asparaginyl-tRNA or glutaminyl-tRNA synthetases. The reaction takes place in the presence of glutamine and ATP through an activated phospho-Asp-tRNA(Asn) or phospho-Glu-tRNA(Gln). In Geotalea uraniireducens (strain Rf4) (Geobacter uraniireducens), this protein is Aspartyl/glutamyl-tRNA(Asn/Gln) amidotransferase subunit C.